Consider the following 587-residue polypeptide: GATA zinc finger domain-containing protein 3 (587 aa).

The segment covering 53 to 74 has biased composition (low complexity); that stretch reads NINNNINNNNNNNNNNNNNNIN. 3 disordered regions span residues 53 to 141, 179 to 294, and 312 to 392; these read NINN…LKIP, QLAH…SSPS, and QTSP…ATIN. Polar residues predominate over residues 75-86; sequence QYHQNHYDQYSD. Composition is skewed to low complexity over residues 87–136, 183–202, 237–264, 272–292, and 316–333; these read NNCN…NNNN, NSSM…TPTS, NING…INNG, GNNN…NSSS, and SQQS…QQSQ. 2 stretches are compositionally biased toward polar residues: residues 340 to 358 and 365 to 379; these read INTT…TNSP and NESS…TPLS. The GATA-type zinc-finger motif lies at 500-525; the sequence is CIFCGTMETPEWRKGPGGHKTLCNAC. The segment at 536-587 is disordered; the sequence is ENQNNGGSPNPQQNNVTTTTTTTTSTSTNSPNSNGNNFSPESAMSVSKLISD. Residues 538 to 575 are compositionally biased toward low complexity; the sequence is QNNGGSPNPQQNNVTTTTTTTTSTSTNSPNSNGNNFSP. The span at 577-587 shows a compositional bias: polar residues; sequence SAMSVSKLISD.

In Dictyostelium discoideum (Social amoeba), this protein is GATA zinc finger domain-containing protein 3 (gtaC).